The primary structure comprises 237 residues: Lectin (237 aa).

Asn69 is a glycosylation site (N-linked (GlcNAc...) asparagine). Ile106 bears the Blocked amino end (Ile) mark. Mn(2+)-binding residues include Glu115 and Asp117. Residues Asp117, Tyr120, Asn122, and Asp127 each contribute to the Ca(2+) site. The Mn(2+) site is built by Asp127 and His132.

The protein belongs to the leguminous lectin family. In terms of assembly, tetramer of two alpha and two beta chains. The N-terminus of alpha chain is blocked. The alpha and beta chains are produced by proteolytic processing, with probably the loss of intervening amino acid(s).

In terms of biological role, D-mannose/D-glucose-binding lectin. Requires Ca(2+) and Mn(2+) ions for full activity. In Lablab purpureus (Hyacinth bean), this protein is Lectin.